The following is a 192-amino-acid chain: Ribosome maturation factor RimM (192 aa).

A PRC barrel domain is found at 97-172; the sequence is EDEYYLADLI…VVLADPPALV (76 aa). Residues 168 to 192 are disordered; that stretch reads PPALVGEPEGPESPAEDDDGERHYD.

It belongs to the RimM family. In terms of assembly, binds ribosomal protein uS19.

It localises to the cytoplasm. An accessory protein needed during the final step in the assembly of 30S ribosomal subunit, possibly for assembly of the head region. Essential for efficient processing of 16S rRNA. May be needed both before and after RbfA during the maturation of 16S rRNA. It has affinity for free ribosomal 30S subunits but not for 70S ribosomes. The chain is Ribosome maturation factor RimM from Caulobacter sp. (strain K31).